The sequence spans 499 residues: Glycerol kinase (499 aa).

An ADP-binding site is contributed by threonine 12. 3 residues coordinate ATP: threonine 12, threonine 13, and serine 14. Threonine 12 provides a ligand contact to sn-glycerol 3-phosphate. Residue arginine 16 participates in ADP binding. Sn-glycerol 3-phosphate contacts are provided by arginine 82, glutamate 83, tyrosine 134, and aspartate 243. Glycerol contacts are provided by arginine 82, glutamate 83, tyrosine 134, aspartate 243, and glutamine 244. ADP-binding residues include threonine 265 and glycine 308. Positions 265, 308, 312, and 411 each coordinate ATP. An ADP-binding site is contributed by glycine 411.

Belongs to the FGGY kinase family.

The catalysed reaction is glycerol + ATP = sn-glycerol 3-phosphate + ADP + H(+). It functions in the pathway polyol metabolism; glycerol degradation via glycerol kinase pathway; sn-glycerol 3-phosphate from glycerol: step 1/1. Its activity is regulated as follows. Inhibited by fructose 1,6-bisphosphate (FBP). In terms of biological role, key enzyme in the regulation of glycerol uptake and metabolism. Catalyzes the phosphorylation of glycerol to yield sn-glycerol 3-phosphate. This is Glycerol kinase from Agrobacterium fabrum (strain C58 / ATCC 33970) (Agrobacterium tumefaciens (strain C58)).